The chain runs to 63 residues: Large ribosomal subunit protein eL37 (63 aa).

Cysteine 20, cysteine 23, cysteine 35, and cysteine 38 together coordinate Zn(2+). Residues 20–38 form a C4-type zinc finger; it reads CRRCGRRAFNVKKGYCAAC.

Belongs to the eukaryotic ribosomal protein eL37 family. Zn(2+) serves as cofactor.

Its function is as follows. Binds to the 23S rRNA. The polypeptide is Large ribosomal subunit protein eL37 (Thermococcus gammatolerans (strain DSM 15229 / JCM 11827 / EJ3)).